Reading from the N-terminus, the 395-residue chain is MASIEQALAEIKRGIDELIPEEELIAKLKENRPLRIKLGADPTAPDIHLGHTVILNKLRTFQELGHDVTFLIGDFTGMVGDPTGKNTTRPPLTREDVLANAETYKEQVFKILDPAKTKIEFNSTWLSELGAEGMIRLASNQTVARMLERDDFKKRYNGGRPIAIHEFMYPLLQGYDSVAMETDVELGGTDQKFNLLMGRELQKSHGQKPQVVLTMPLLVGLDGVKKMSKSAHNYIGVSEVPTEMFGKIMSISDDLMWNYFECLSFRPLEEIEQFKQDMANGKNPRDVKILLAKEIIARFHSEADADAAEQEFINRFQKGAMPEEMPELEFEAGIAISNLLKDAGLVNSTSDAMRMIRQGGAKIDGNKIEDTKLIPAAGTAVYQVGKRKFARITLK.

Positions 42–51 (PTAPDIHLGH) match the 'HIGH' region motif. Residues 226 to 230 (KMSKS) carry the 'KMSKS' region motif. Lys-229 serves as a coordination point for ATP. The region spanning 334–394 (IAISNLLKDA…GKRKFARITL (61 aa)) is the S4 RNA-binding domain.

This sequence belongs to the class-I aminoacyl-tRNA synthetase family. TyrS type 2 subfamily. As to quaternary structure, homodimer.

The protein localises to the cytoplasm. It carries out the reaction tRNA(Tyr) + L-tyrosine + ATP = L-tyrosyl-tRNA(Tyr) + AMP + diphosphate + H(+). In terms of biological role, catalyzes the attachment of tyrosine to tRNA(Tyr) in a two-step reaction: tyrosine is first activated by ATP to form Tyr-AMP and then transferred to the acceptor end of tRNA(Tyr). The sequence is that of Tyrosine--tRNA ligase from Photobacterium profundum (strain SS9).